Reading from the N-terminus, the 226-residue chain is ATP-dependent dethiobiotin synthetase BioD (226 aa).

12–17 (GVGKTV) provides a ligand contact to ATP. Thr-16 serves as a coordination point for Mg(2+). Lys-37 is an active-site residue. Position 41 (Thr-41) interacts with substrate. ATP is bound by residues Asp-49, 108–111 (EGAG), and 169–170 (GS). 2 residues coordinate Mg(2+): Asp-49 and Glu-108.

Belongs to the dethiobiotin synthetase family. In terms of assembly, homodimer. The cofactor is Mg(2+).

The protein resides in the cytoplasm. The catalysed reaction is (7R,8S)-7,8-diammoniononanoate + CO2 + ATP = (4R,5S)-dethiobiotin + ADP + phosphate + 3 H(+). It participates in cofactor biosynthesis; biotin biosynthesis; biotin from 7,8-diaminononanoate: step 1/2. In terms of biological role, catalyzes a mechanistically unusual reaction, the ATP-dependent insertion of CO2 between the N7 and N8 nitrogen atoms of 7,8-diaminopelargonic acid (DAPA, also called 7,8-diammoniononanoate) to form a ureido ring. In Mycobacterium marinum (strain ATCC BAA-535 / M), this protein is ATP-dependent dethiobiotin synthetase BioD.